The chain runs to 145 residues: Large ribosomal subunit protein bL9 (145 aa).

The protein belongs to the bacterial ribosomal protein bL9 family.

Its function is as follows. Binds to the 23S rRNA. This Mesomycoplasma hyopneumoniae (strain 232) (Mycoplasma hyopneumoniae) protein is Large ribosomal subunit protein bL9.